The primary structure comprises 446 residues: Adenylosuccinate synthetase (446 aa).

GTP-binding positions include 20–26 (GDEGKGK) and 48–50 (GHT). The active-site Proton acceptor is the Asp-21. Residues Asp-21 and Gly-48 each coordinate Mg(2+). IMP contacts are provided by residues 21 to 24 (DEGK), 46 to 49 (NAGH), Thr-137, Arg-151, Gln-232, Thr-247, and Arg-319. His-49 serves as the catalytic Proton donor. 315-321 (SVTGRPR) provides a ligand contact to substrate. GTP contacts are provided by residues Arg-321, 347-349 (KLD), and 429-431 (STG).

Belongs to the adenylosuccinate synthetase family. In terms of assembly, homodimer. Requires Mg(2+) as cofactor.

Its subcellular location is the cytoplasm. It carries out the reaction IMP + L-aspartate + GTP = N(6)-(1,2-dicarboxyethyl)-AMP + GDP + phosphate + 2 H(+). It functions in the pathway purine metabolism; AMP biosynthesis via de novo pathway; AMP from IMP: step 1/2. In terms of biological role, plays an important role in the de novo pathway of purine nucleotide biosynthesis. Catalyzes the first committed step in the biosynthesis of AMP from IMP. The chain is Adenylosuccinate synthetase from Ralstonia pickettii (strain 12J).